We begin with the raw amino-acid sequence, 513 residues long: Xylose import ATP-binding protein XylG (513 aa).

ABC transporter domains lie at 5–242 (LEMK…VGRE) and 259–505 (LRIE…LRSE). 37-44 (GENGSGKS) contributes to the ATP binding site.

This sequence belongs to the ABC transporter superfamily. Xylose importer (TC 3.A.1.2.4) family. The complex is composed of two ATP-binding proteins (XylG), two transmembrane proteins (XylH) and a solute-binding protein (XylF).

The protein localises to the cell inner membrane. It catalyses the reaction D-xylose(out) + ATP + H2O = D-xylose(in) + ADP + phosphate + H(+). Functionally, part of the ABC transporter complex XylFGH involved in xylose import. Responsible for energy coupling to the transport system. This chain is Xylose import ATP-binding protein XylG, found in Escherichia coli O6:K15:H31 (strain 536 / UPEC).